Reading from the N-terminus, the 400-residue chain is Acetate kinase (400 aa).

Residue N7 participates in Mg(2+) binding. K14 serves as a coordination point for ATP. Residue R90 coordinates substrate. Residue D147 is the Proton donor/acceptor of the active site. ATP contacts are provided by residues 207–211 (HLGNG), 282–284 (DFR), and 331–335 (GIGEN). E384 provides a ligand contact to Mg(2+).

Belongs to the acetokinase family. As to quaternary structure, homodimer. Mg(2+) serves as cofactor. Requires Mn(2+) as cofactor.

The protein localises to the cytoplasm. The enzyme catalyses acetate + ATP = acetyl phosphate + ADP. Its pathway is metabolic intermediate biosynthesis; acetyl-CoA biosynthesis; acetyl-CoA from acetate: step 1/2. Functionally, catalyzes the formation of acetyl phosphate from acetate and ATP. Can also catalyze the reverse reaction. The protein is Acetate kinase of Thermoanaerobacterium thermosaccharolyticum (strain ATCC 7956 / DSM 571 / NCIMB 9385 / NCA 3814 / NCTC 13789 / WDCM 00135 / 2032) (Clostridium thermosaccharolyticum).